Consider the following 795-residue polypeptide: MKFSESWLREWVKPAINSEELAHQITMAGLEVDEVAPVAGEFTGVKVGKVVECGQHPDADKLRVTKIDIGEEELLDIVCGASNCRLGLTVAVATVGAVLPGNFKIKKAKLRGVPSHGMLCSFSELGIDVESEGILELPEGTTLGADVRDILELNDVAIDVDLTANRADCFSIRGLAREVGVLNRADVTEPTIAAVATSIEDAVSIEVKATEACPRYLGRVIKNVNAKAETPIWMQEKLRRCGIRSIDAIVDITNYVMLEQGQPMHAFDLAKIDGGIVVRMAEQDEKLTLLDGNEAKLNDNTLVIADQNKALAIAGIFGGQESGVTSETTDIMLECAFFAPDHIRGRARAYGLHTDSSLRFERGVDSTLQAAAMERATQLLVELCGGEVAPVVAVESEADLPKANTVELRRSKLDGLLGHHIPSTDVVEILTRLGCAVESTDTGWTASSPSWRFDIAIEQDLIEEVGRIYGYNNIPNQAPVAALNMNDHKEANQPLKRVRDLLVDRGYHEAITYSFVEPEQQKLIVPEIEPLILPFPISAEMSAMRLSLWTGLINTVVHNQKRQQPRVRLFESGLRFIPEESAENGMRQEMMLAGIIAGTRGEEHWDIATNTVDFFDLKGDLEAVLELTANELAYEFKAAKHPALHPGQTAAIVVDGKEVGFIGTVHPELERKFGLNGRTIMFEIEWDAINTRVIPEAASVSKFPANRRDIAIVADEAIASGDIVAECLASGGELLTSAKLFDVYRGQGVEEGKKSLAIALTLQSVERTLEEADITSAVDAIVAAIGEKFSATLRD.

The tRNA-binding domain occupies 39–148; that stretch reads AGEFTGVKVG…EGTTLGADVR (110 aa). A B5 domain is found at 401 to 476; it reads PKANTVELRR…RIYGYNNIPN (76 aa). Mg(2+) is bound by residues D454, D460, E463, and E464. One can recognise an FDX-ACB domain in the interval 701–794; that stretch reads SKFPANRRDI…IGEKFSATLR (94 aa).

This sequence belongs to the phenylalanyl-tRNA synthetase beta subunit family. Type 1 subfamily. In terms of assembly, tetramer of two alpha and two beta subunits. The cofactor is Mg(2+).

It localises to the cytoplasm. It carries out the reaction tRNA(Phe) + L-phenylalanine + ATP = L-phenylalanyl-tRNA(Phe) + AMP + diphosphate + H(+). The chain is Phenylalanine--tRNA ligase beta subunit from Aliivibrio fischeri (strain ATCC 700601 / ES114) (Vibrio fischeri).